Here is a 397-residue protein sequence, read N- to C-terminus: Phosphoglycerate transport regulatory protein PgtC (397 aa).

The N-terminal stretch at 1–24 (MFGSCQAYSRELVMATTFSPSATA) is a signal peptide. A helical transmembrane segment spans residues 102–117 (TSVAVAVSGFGLLINR).

It localises to the cell membrane. In terms of biological role, required for pgtP expression, it may act jointly with the PgtA/PgtB signaling proteins. This is Phosphoglycerate transport regulatory protein PgtC (pgtC) from Salmonella typhi.